Reading from the N-terminus, the 166-residue chain is Interferon gamma (166 aa).

A signal peptide spans Met-1 to Cys-23. Position 24 is a pyrrolidone carboxylic acid (Gln-24). Residues Asn-39 and Asn-106 are each glycosylated (N-linked (GlcNAc...) asparagine). The disordered stretch occupies residues Ser-147–Lys-166.

The protein belongs to the type II (or gamma) interferon family. In terms of assembly, homodimer. Interacts with IFNGR1 (via extracellular domain); this interaction promotes IFNGR1 dimerization. Released primarily from activated T lymphocytes.

The protein resides in the secreted. Functionally, type II interferon produced by immune cells such as T-cells and NK cells that plays crucial roles in antimicrobial, antiviral, and antitumor responses by activating effector immune cells and enhancing antigen presentation. Primarily signals through the JAK-STAT pathway after interaction with its receptor IFNGR1 to affect gene regulation. Upon IFNG binding, IFNGR1 intracellular domain opens out to allow association of downstream signaling components JAK2, JAK1 and STAT1, leading to STAT1 activation, nuclear translocation and transcription of IFNG-regulated genes. Many of the induced genes are transcription factors such as IRF1 that are able to further drive regulation of a next wave of transcription. Plays a role in class I antigen presentation pathway by inducing a replacement of catalytic proteasome subunits with immunoproteasome subunits. In turn, increases the quantity, quality, and repertoire of peptides for class I MHC loading. Increases the efficiency of peptide generation also by inducing the expression of activator PA28 that associates with the proteasome and alters its proteolytic cleavage preference. Up-regulates as well MHC II complexes on the cell surface by promoting expression of several key molecules such as cathepsins B/CTSB, H/CTSH, and L/CTSL. Participates in the regulation of hematopoietic stem cells during development and under homeostatic conditions by affecting their development, quiescence, and differentiation. In Lama glama (Llama), this protein is Interferon gamma (IFNG).